A 783-amino-acid polypeptide reads, in one-letter code: Mitochondrial intermediate peptidase (783 aa).

Residues Met1–Phe33 constitute a mitochondrion transit peptide. His565 lines the Zn(2+) pocket. The active site involves Glu566. His569 and His572 together coordinate Zn(2+).

Belongs to the peptidase M3 family. Zn(2+) serves as cofactor.

The protein localises to the mitochondrion matrix. It catalyses the reaction Release of an N-terminal octapeptide as second stage of processing of some proteins imported into the mitochondrion.. Cleaves proteins, imported into the mitochondrion, to their mature size. While most mitochondrial precursor proteins are processed to the mature form in one step by mitochondrial processing peptidase (MPP), the sequential cleavage by MIP of an octapeptide after initial processing by MPP is a required step for a subgroup of nuclear-encoded precursor proteins destined for the matrix or the inner membrane. This is Mitochondrial intermediate peptidase (OCT1) from Candida albicans (strain SC5314 / ATCC MYA-2876) (Yeast).